A 307-amino-acid polypeptide reads, in one-letter code: Glycerol-3-phosphate dehydrogenase [NAD(P)+] (307 aa).

Positions 14, 34, 35, and 82 each coordinate NADPH. Residues Lys82 and Gly110 each coordinate sn-glycerol 3-phosphate. Position 114 (Ser114) interacts with NADPH. Lys165, Asp218, Ser228, Arg229, and Asn230 together coordinate sn-glycerol 3-phosphate. The Proton acceptor role is filled by Lys165. Position 229 (Arg229) interacts with NADPH. Glu255 provides a ligand contact to NADPH.

It belongs to the NAD-dependent glycerol-3-phosphate dehydrogenase family.

It is found in the cytoplasm. It catalyses the reaction sn-glycerol 3-phosphate + NAD(+) = dihydroxyacetone phosphate + NADH + H(+). It carries out the reaction sn-glycerol 3-phosphate + NADP(+) = dihydroxyacetone phosphate + NADPH + H(+). Its pathway is membrane lipid metabolism; glycerophospholipid metabolism. In terms of biological role, catalyzes the reduction of the glycolytic intermediate dihydroxyacetone phosphate (DHAP) to sn-glycerol 3-phosphate (G3P), the key precursor for phospholipid synthesis. This Trichormus variabilis (strain ATCC 29413 / PCC 7937) (Anabaena variabilis) protein is Glycerol-3-phosphate dehydrogenase [NAD(P)+].